A 171-amino-acid chain; its full sequence is Methyl-coenzyme M reductase operon protein D (171 aa).

As to quaternary structure, MCR is composed of three subunits: alpha, beta, and gamma. The function of proteins C and D is not known.

The protein is Methyl-coenzyme M reductase operon protein D (mcrD) of Methanosarcina barkeri (strain Fusaro / DSM 804).